The following is a 138-amino-acid chain: Large ribosomal subunit protein uL16 (138 aa).

The segment covering 1–16 (MLIPRRVKHRKQHHPG) has biased composition (basic residues). The segment at 1-25 (MLIPRRVKHRKQHHPGRSGAATGGT) is disordered.

The protein belongs to the universal ribosomal protein uL16 family. As to quaternary structure, part of the 50S ribosomal subunit.

Its function is as follows. Binds 23S rRNA and is also seen to make contacts with the A and possibly P site tRNAs. The sequence is that of Large ribosomal subunit protein uL16 from Pseudarthrobacter chlorophenolicus (strain ATCC 700700 / DSM 12829 / CIP 107037 / JCM 12360 / KCTC 9906 / NCIMB 13794 / A6) (Arthrobacter chlorophenolicus).